The sequence spans 82 residues: Penaeidin-3e (82 aa).

Residues methionine 1–glycine 19 form the signal peptide. Glutamine 20 is modified (pyrrolidone carboxylic acid). Cystine bridges form between cysteine 51/cysteine 66, cysteine 55/cysteine 73, and cysteine 67/cysteine 74. Residue serine 81 is modified to Serine amide.

Belongs to the penaeidin family.

It localises to the cytoplasmic granule. Functionally, antibacterial and antifungal activity. Presents chitin-binding activity. This Penaeus vannamei (Whiteleg shrimp) protein is Penaeidin-3e.